Consider the following 570-residue polypeptide: Sulfite reductase [NADPH] hemoprotein beta-component (570 aa).

The [4Fe-4S] cluster site is built by C434, C440, C479, and C483. Residue C483 coordinates siroheme.

Belongs to the nitrite and sulfite reductase 4Fe-4S domain family. Alpha(8)-beta(8). The alpha component is a flavoprotein, the beta component is a hemoprotein. It depends on siroheme as a cofactor. The cofactor is [4Fe-4S] cluster.

The catalysed reaction is hydrogen sulfide + 3 NADP(+) + 3 H2O = sulfite + 3 NADPH + 4 H(+). The protein operates within sulfur metabolism; hydrogen sulfide biosynthesis; hydrogen sulfide from sulfite (NADPH route): step 1/1. Component of the sulfite reductase complex that catalyzes the 6-electron reduction of sulfite to sulfide. This is one of several activities required for the biosynthesis of L-cysteine from sulfate. The polypeptide is Sulfite reductase [NADPH] hemoprotein beta-component (Escherichia fergusonii (strain ATCC 35469 / DSM 13698 / CCUG 18766 / IAM 14443 / JCM 21226 / LMG 7866 / NBRC 102419 / NCTC 12128 / CDC 0568-73)).